Reading from the N-terminus, the 309-residue chain is Probable RuBisCO transcriptional regulator (309 aa).

The HTH lysR-type domain occupies 6–63; that stretch reads FTLDQLRILKAIVKEGSFKRAADSLYVSQPAISLQIQNLEKQLNIPLFERSNKKATLT. Positions 23 to 42 form a DNA-binding region, H-T-H motif; the sequence is FKRAADSLYVSQPAISLQIQ.

This sequence belongs to the LysR transcriptional regulatory family.

The protein localises to the plastid. It localises to the chloroplast. Functionally, trans-acting transcriptional regulator of RuBisCO genes (rbcL and rbcS) expression. In Gracilaria tenuistipitata var. liui (Red alga), this protein is Probable RuBisCO transcriptional regulator (rbcR).